A 202-amino-acid chain; its full sequence is Protein cuti-1 (202 aa).

Topologically, residues 1–37 are cytoplasmic; it reads MPNDRVAPLPPNFVYSPHDKFYYAPATCNSMHYTTAS. Residues 38–58 traverse the membrane as a helical segment; the sequence is YISAFIEFLVMGTGAICFYVM. Over 59–68 the chain is Extracellular; that stretch reads SHKSDSIGKW. A helical transmembrane segment spans residues 69 to 89; that stretch reads LFYIQAGITVLSLLTSALMAF. The Cytoplasmic portion of the chain corresponds to 90–107; that stretch reads GLWKENPQMLGSKLKFIE. A helical transmembrane segment spans residues 108–128; sequence FIICFLLIWAVISIVCMAFGI. Residues 129 to 148 lie on the Extracellular side of the membrane; it reads QFTRQVFGIFGKVHRIEQDY. The chain crosses the membrane as a helical span at residues 149-169; it reads GPIWPFNIAVVSFFTAAIAIW. The Cytoplasmic portion of the chain corresponds to 170–202; that stretch reads TRIIIQGAADYLYDKAYFADKQNVELRESSKTR.

In terms of assembly, interacts with vps-39.

The protein localises to the cell membrane. It localises to the cytoplasm. Its function is as follows. Involved in cuticle formation and ensures cuticle shedding during larval development. Plays a role in maintaining the hypodermis. In association with vps-39, may play a role in vesicle tethering. This Caenorhabditis elegans protein is Protein cuti-1.